We begin with the raw amino-acid sequence, 124 residues long: Pal-related lipoprotein (124 aa).

The signal sequence occupies residues 1-18; that stretch reads MRYRAVFPMLIIVFALSG. Cys-19 carries N-palmitoyl cysteine lipidation. Cys-19 is lipidated: S-diacylglycerol cysteine.

The protein resides in the cell membrane. This is Pal-related lipoprotein (slp) from Bacillus subtilis (strain 168).